A 154-amino-acid polypeptide reads, in one-letter code: Large ribosomal subunit protein uL13 (154 aa).

It belongs to the universal ribosomal protein uL13 family. In terms of assembly, part of the 50S ribosomal subunit.

In terms of biological role, this protein is one of the early assembly proteins of the 50S ribosomal subunit, although it is not seen to bind rRNA by itself. It is important during the early stages of 50S assembly. This Rhodospirillum rubrum (strain ATCC 11170 / ATH 1.1.1 / DSM 467 / LMG 4362 / NCIMB 8255 / S1) protein is Large ribosomal subunit protein uL13.